The primary structure comprises 573 residues: AP-4 complex accessory subunit Tepsin (573 aa).

Positions 8-141 (RDRLSFLHRL…FSDAVPQPPS (134 aa)) constitute an ENTH domain. Disordered regions lie at residues 136–155 (VPQP…MGAQ) and 194–311 (NAVR…NDCQ). The span at 137 to 150 (PQPPSQPPQIPPPA) shows a compositional bias: pro residues. The segment covering 217-229 (PAVTPSASHTHPN) has biased composition (polar residues). The segment covering 260 to 293 (SSPSSQNSSCTSNLSRASDSGSRSGSDSHSGTSR) has biased composition (low complexity). The span at 294 to 303 (EPGDLAERAE) shows a compositional bias: basic and acidic residues. S400 carries the post-translational modification Phosphoserine. Positions 497 to 526 (CSSEQGTESEQRLENTDTPEDSSSPLPWSP) are disordered. The tract at residues 526-536 (PNSLFAGMELV) is interaction with AP4B1. Positions 563-573 (SEPSAFAFLNM) are interaction with AP4E1.

Interacts with AP4B1 and AP4E1; the interaction is direct and mediates the association of TEPSIN with the adapter-like complex 4 (AP-4), a heterotetramer composed of AP4B1, AP4E1, AP4M1 and AP4S1.

It localises to the golgi apparatus. The protein resides in the trans-Golgi network membrane. Its subcellular location is the cytoplasmic vesicle. The protein localises to the cytoplasm. It is found in the cytosol. Functionally, associates with the adapter-like complex 4 (AP-4) and may therefore play a role in vesicular trafficking of proteins at the trans-Golgi network. This Mus musculus (Mouse) protein is AP-4 complex accessory subunit Tepsin.